Here is a 182-residue protein sequence, read N- to C-terminus: Inner membrane assembly complex subunit 17 (182 aa).

Residues 1–45 constitute a mitochondrion transit peptide; it reads MLKRRSNALITLSRTKLFPITTVAYYHRRLLNQQRRAVSTSPKKE. Topologically, residues 46-107 are mitochondrial matrix; that stretch reads IKSLEDLANL…EIPVKRFIRP (62 aa). Residues 108–127 form a helical membrane-spanning segment; it reads LWMFILMGSSVYLLLHFSWW. Residues 128-158 are a coiled coil; that stretch reads KLEHEERESQLKKEVEILEHQLNELIIQDKT. Residues 128–182 lie on the Mitochondrial intermembrane side of the membrane; the sequence is KLEHEERESQLKKEVEILEHQLNELIIQDKTHNTSRGKGSNESTHMKPWYRRWFW.

This sequence belongs to the INA17 family. Component of the inner membrane assembly (INA) complex, composed of INA17 and INA22. Interacts with a subset of F(1)F(0)-ATP synthase subunits of the F(1)-domain and the peripheral stalk.

Its subcellular location is the mitochondrion inner membrane. Functionally, component of the INA complex (INAC) that promotes the biogenesis of mitochondrial F(1)F(0)-ATP synthase. INAC facilitates the assembly of the peripheral stalk and promotes the assembly of the catalytic F(1)-domain with the membrane-embedded F(0)-domain. The polypeptide is Inner membrane assembly complex subunit 17 (Saccharomyces cerevisiae (strain YJM789) (Baker's yeast)).